Here is a 270-residue protein sequence, read N- to C-terminus: MQITPENTWAAVKAIRSRAPLIHNITNYVVMNSTANALLALGASPVMAHAQEEVEEMVGIAQALVVNIGTLSPSWVRAMASAALKAADRGIPIILDPVGAGATAYRTRTAFQLLETVSPTIIRGNASEILAFESVETMETRGVDSTELSQNAVDAGRRLNDSYGSTVCISGETDFIIGDRAILGIRNGHPLMTRVTGLGCTASALCGAFAAVNSSFTLAAAQAMAVMGIAGEMAAEISPGPGSLQLHFLDILYRLTEEDIARRLRIVAGE.

Methionine 47 lines the substrate pocket. ATP is bound by residues arginine 123 and serine 170. Glycine 197 is a binding site for substrate.

Belongs to the Thz kinase family. The cofactor is Mg(2+).

It catalyses the reaction 5-(2-hydroxyethyl)-4-methylthiazole + ATP = 4-methyl-5-(2-phosphooxyethyl)-thiazole + ADP + H(+). Its pathway is cofactor biosynthesis; thiamine diphosphate biosynthesis; 4-methyl-5-(2-phosphoethyl)-thiazole from 5-(2-hydroxyethyl)-4-methylthiazole: step 1/1. Functionally, catalyzes the phosphorylation of the hydroxyl group of 4-methyl-5-beta-hydroxyethylthiazole (THZ). The chain is Hydroxyethylthiazole kinase from Syntrophus aciditrophicus (strain SB).